Reading from the N-terminus, the 382-residue chain is MKYELDKTSGNARRGRLVFERPQGTFSVETPAFMPVGTYGTVKGMTPEEVRATGAEILLGNTFHLWLRPGQEIMRKHGDLHDFMQWHRPILTDSGGFQVFSLGKLRKITEEGVKFQNPINGERIFLSPEKSMEIQYDLGSDIVMIFDECTPYPATFDYAKKSMEMSLRWAKRSRDRFDELGNKNALFGIIQGGVFEELRKVSLEGLVNIGFDGYAVGGLAVGEPKEDMHRILEYICPQIPADKPRYLMGVGKPEDLVEGVRRGIDMFDCVMPTRNARNGHLFVTDGIVKIRNAKYRDDTSPLDPECDCYTCKNYTKAYLYHLDKCGEILGARLNTIHNLRYYQRLMAEIRQAIEDDRFDDFVVEFYARMGKPVPPLQLADKS.

Residue Asp93 is the Proton acceptor of the active site. Residues 93 to 97 (DSGGF), Asp147, Gln191, and Gly218 each bind substrate. The tract at residues 249–255 (GVGKPED) is RNA binding. Asp268 (nucleophile) is an active-site residue. An RNA binding; important for wobble base 34 recognition region spans residues 273–277 (TRNAR). Zn(2+) is bound by residues Cys306, Cys308, Cys311, and His337.

This sequence belongs to the queuine tRNA-ribosyltransferase family. In terms of assembly, homodimer. Within each dimer, one monomer is responsible for RNA recognition and catalysis, while the other monomer binds to the replacement base PreQ1. Zn(2+) is required as a cofactor.

It carries out the reaction 7-aminomethyl-7-carbaguanine + guanosine(34) in tRNA = 7-aminomethyl-7-carbaguanosine(34) in tRNA + guanine. The protein operates within tRNA modification; tRNA-queuosine biosynthesis. Catalyzes the base-exchange of a guanine (G) residue with the queuine precursor 7-aminomethyl-7-deazaguanine (PreQ1) at position 34 (anticodon wobble position) in tRNAs with GU(N) anticodons (tRNA-Asp, -Asn, -His and -Tyr). Catalysis occurs through a double-displacement mechanism. The nucleophile active site attacks the C1' of nucleotide 34 to detach the guanine base from the RNA, forming a covalent enzyme-RNA intermediate. The proton acceptor active site deprotonates the incoming PreQ1, allowing a nucleophilic attack on the C1' of the ribose to form the product. After dissociation, two additional enzymatic reactions on the tRNA convert PreQ1 to queuine (Q), resulting in the hypermodified nucleoside queuosine (7-(((4,5-cis-dihydroxy-2-cyclopenten-1-yl)amino)methyl)-7-deazaguanosine). This is Queuine tRNA-ribosyltransferase from Haemophilus influenzae (strain PittEE).